The primary structure comprises 144 residues: 3-dehydroquinate dehydratase (144 aa).

Y24 (proton acceptor) is an active-site residue. Residues N76, H82, and D89 each coordinate substrate. H102 acts as the Proton donor in catalysis. Substrate contacts are provided by residues L103–S104 and R113.

This sequence belongs to the type-II 3-dehydroquinase family. In terms of assembly, homododecamer.

It carries out the reaction 3-dehydroquinate = 3-dehydroshikimate + H2O. Its pathway is metabolic intermediate biosynthesis; chorismate biosynthesis; chorismate from D-erythrose 4-phosphate and phosphoenolpyruvate: step 3/7. Catalyzes a trans-dehydration via an enolate intermediate. This Bordetella avium (strain 197N) protein is 3-dehydroquinate dehydratase.